We begin with the raw amino-acid sequence, 156 residues long: Small ribosomal subunit protein uS7 (156 aa).

It belongs to the universal ribosomal protein uS7 family. As to quaternary structure, part of the 30S ribosomal subunit. Contacts proteins S9 and S11.

One of the primary rRNA binding proteins, it binds directly to 16S rRNA where it nucleates assembly of the head domain of the 30S subunit. Is located at the subunit interface close to the decoding center, probably blocks exit of the E-site tRNA. The protein is Small ribosomal subunit protein uS7 of Mycobacterium sp. (strain JLS).